The primary structure comprises 468 residues: 3-isopropylmalate dehydratase large subunit (468 aa).

[4Fe-4S] cluster is bound by residues C347, C407, and C410.

It belongs to the aconitase/IPM isomerase family. LeuC type 1 subfamily. In terms of assembly, heterodimer of LeuC and LeuD. [4Fe-4S] cluster is required as a cofactor.

The catalysed reaction is (2R,3S)-3-isopropylmalate = (2S)-2-isopropylmalate. Its pathway is amino-acid biosynthesis; L-leucine biosynthesis; L-leucine from 3-methyl-2-oxobutanoate: step 2/4. Its function is as follows. Catalyzes the isomerization between 2-isopropylmalate and 3-isopropylmalate, via the formation of 2-isopropylmaleate. The chain is 3-isopropylmalate dehydratase large subunit from Synechocystis sp. (strain ATCC 27184 / PCC 6803 / Kazusa).